The chain runs to 149 residues: Transcriptional repressor NrdR (149 aa).

The segment at 3–34 (CPFCGFEESKVVDSRSTDDNTTIRRRRECLKC) is a zinc-finger region. The ATP-cone domain maps to 49 to 139 (ILVIKKDLTR…VYRQFKDIDT (91 aa)).

The protein belongs to the NrdR family. Zn(2+) is required as a cofactor.

In terms of biological role, negatively regulates transcription of bacterial ribonucleotide reductase nrd genes and operons by binding to NrdR-boxes. This chain is Transcriptional repressor NrdR, found in Clostridium beijerinckii (strain ATCC 51743 / NCIMB 8052) (Clostridium acetobutylicum).